Consider the following 157-residue polypeptide: Lipoprotein signal peptidase (157 aa).

4 helical membrane-spanning segments follow: residues 10–30 (LVFI…KHAI), 36–56 (YESL…FSLL), 58–78 (FLEG…FIFL), and 84–104 (LFKN…SNVL). Active-site residues include aspartate 114 and aspartate 131. A helical membrane pass occupies residues 122-142 (FDFAIFNFADVMIDVGVGVLL).

Belongs to the peptidase A8 family.

It is found in the cell inner membrane. It catalyses the reaction Release of signal peptides from bacterial membrane prolipoproteins. Hydrolyzes -Xaa-Yaa-Zaa-|-(S,diacylglyceryl)Cys-, in which Xaa is hydrophobic (preferably Leu), and Yaa (Ala or Ser) and Zaa (Gly or Ala) have small, neutral side chains.. It participates in protein modification; lipoprotein biosynthesis (signal peptide cleavage). Functionally, this protein specifically catalyzes the removal of signal peptides from prolipoproteins. This Helicobacter pylori (strain P12) protein is Lipoprotein signal peptidase.